A 535-amino-acid polypeptide reads, in one-letter code: D-2-hydroxyglutarate dehydrogenase, mitochondrial (535 aa).

The transit peptide at 1–50 (MVLHLVPRWSASLFRASPRWKKTYSQRASAQLKWLGCPRSVYSPLACRAY) directs the protein to the mitochondrion. An FAD-binding PCMH-type domain is found at 110-289 (VRGCSKVLLR…TAVSIVCPPR (180 aa)). Lys-115 bears the N6-succinyllysine mark. The (R)-2-hydroxyglutarate site is built by Arg-400, Thr-404, and Lys-415. Arg-400 contacts (R)-lactate. Residues Arg-400, Thr-404, and Lys-415 each contribute to the (R)-malate site. Residues His-448 and His-455 each coordinate Zn(2+). Asn-457 lines the (R)-2-hydroxyglutarate pocket. Glu-489 lines the Zn(2+) pocket. His-490 contacts (R)-2-hydroxyglutarate. Residue His-490 coordinates (R)-lactate. His-490 is a (R)-malate binding site.

It belongs to the FAD-binding oxidoreductase/transferase type 4 family. FAD serves as cofactor.

Its subcellular location is the mitochondrion. It catalyses the reaction (R)-2-hydroxyglutarate + A = 2-oxoglutarate + AH2. The catalysed reaction is (R)-malate + A = oxaloacetate + AH2. Its activity is regulated as follows. Activated by zinc, cobalt and manganese ions. Inhibited by EDTA. Its function is as follows. Catalyzes the oxidation of D-2-hydroxyglutarate (D-2-HG) to alpha-ketoglutarate. Also catalyzes the oxidation of other D-2-hydroxyacids, such as D-malate (D-MAL) and D-lactate (D-LAC). Exhibits high activities towards D-2-HG and D-MAL but a very weak activity towards D-LAC. The chain is D-2-hydroxyglutarate dehydrogenase, mitochondrial from Rattus norvegicus (Rat).